Here is a 118-residue protein sequence, read N- to C-terminus: Putative ankyrin repeat protein R747 (118 aa).

Residues 70-99 (NCYYLLDYAIMKNDIPVIVTLIEKGANINR) form an ANK repeat.

The protein is Putative ankyrin repeat protein R747 of Acanthamoeba polyphaga (Amoeba).